A 132-amino-acid polypeptide reads, in one-letter code: MYTILLVGIGGFIGATLRYVFGGWIQNSFVNFPVGTLTINTIGSFFLGLIMYFSEYQGLFSDQTRIFLTIGILGAFTTLSTFGYESFRLLDDSKLMLMSINVVSTVLFSMMAVYLGKTVALGVSSYLLGGMK.

A run of 4 helical transmembrane segments spans residues 4-24 (ILLVGIGGFIGATLRYVFGGW), 32-52 (FPVGTLTINTIGSFFLGLIMY), 66-86 (IFLTIGILGAFTTLSTFGYES), and 95-115 (LMLMSINVVSTVLFSMMAVYL). Residues G74 and T77 each contribute to the Na(+) site.

This sequence belongs to the fluoride channel Fluc/FEX (TC 1.A.43) family.

The protein resides in the cell membrane. It carries out the reaction fluoride(in) = fluoride(out). With respect to regulation, na(+) is not transported, but it plays an essential structural role and its presence is essential for fluoride channel function. In terms of biological role, fluoride-specific ion channel. Important for reducing fluoride concentration in the cell, thus reducing its toxicity. This Methanosarcina barkeri (strain Fusaro / DSM 804) protein is Fluoride-specific ion channel FluC 3.